Here is a 497-residue protein sequence, read N- to C-terminus: Glycerol kinase (497 aa).

Threonine 13 is an ADP binding site. ATP is bound by residues threonine 13, threonine 14, and serine 15. Threonine 13 provides a ligand contact to sn-glycerol 3-phosphate. Arginine 17 is an ADP binding site. Sn-glycerol 3-phosphate is bound by residues arginine 83, glutamate 84, and tyrosine 135. 3 residues coordinate glycerol: arginine 83, glutamate 84, and tyrosine 135. Phosphohistidine; by HPr is present on histidine 231. Position 245 (aspartate 245) interacts with sn-glycerol 3-phosphate. Glycerol contacts are provided by aspartate 245 and glutamine 246. The ADP site is built by threonine 267 and glycine 310. Residues threonine 267, glycine 310, glutamine 314, and glycine 411 each contribute to the ATP site. ADP is bound by residues glycine 411 and asparagine 415.

This sequence belongs to the FGGY kinase family. In terms of assembly, homotetramer and homodimer (in equilibrium). The phosphoenolpyruvate-dependent sugar phosphotransferase system (PTS), including enzyme I, and histidine-containing protein (HPr) are required for the phosphorylation, which leads to the activation of the enzyme.

It carries out the reaction glycerol + ATP = sn-glycerol 3-phosphate + ADP + H(+). Its pathway is polyol metabolism; glycerol degradation via glycerol kinase pathway; sn-glycerol 3-phosphate from glycerol: step 1/1. Activated by phosphorylation and inhibited by fructose 1,6-bisphosphate (FBP). Key enzyme in the regulation of glycerol uptake and metabolism. Catalyzes the phosphorylation of glycerol to yield sn-glycerol 3-phosphate. The chain is Glycerol kinase from Listeria welshimeri serovar 6b (strain ATCC 35897 / DSM 20650 / CCUG 15529 / CIP 8149 / NCTC 11857 / SLCC 5334 / V8).